The primary structure comprises 442 residues: Trigger factor (442 aa).

Residues 165–250 (DDRVIIDFEG…LQKVMAPELP (86 aa)) form the PPIase FKBP-type domain.

The protein belongs to the FKBP-type PPIase family. Tig subfamily.

It localises to the cytoplasm. The catalysed reaction is [protein]-peptidylproline (omega=180) = [protein]-peptidylproline (omega=0). Functionally, involved in protein export. Acts as a chaperone by maintaining the newly synthesized protein in an open conformation. Functions as a peptidyl-prolyl cis-trans isomerase. This is Trigger factor from Coxiella burnetii (strain CbuG_Q212) (Coxiella burnetii (strain Q212)).